Reading from the N-terminus, the 228-residue chain is Triosephosphate isomerase (228 aa).

9-11 (NFK) provides a ligand contact to substrate. Histidine 93 serves as the catalytic Electrophile. The Proton acceptor role is filled by glutamate 141. Residues isoleucine 146, glycine 181, and 202–203 (AS) contribute to the substrate site.

This sequence belongs to the triosephosphate isomerase family. As to quaternary structure, homotetramer; dimer of dimers.

The protein resides in the cytoplasm. It carries out the reaction D-glyceraldehyde 3-phosphate = dihydroxyacetone phosphate. It functions in the pathway carbohydrate biosynthesis; gluconeogenesis. Its pathway is carbohydrate degradation; glycolysis; D-glyceraldehyde 3-phosphate from glycerone phosphate: step 1/1. Its function is as follows. Involved in the gluconeogenesis. Catalyzes stereospecifically the conversion of dihydroxyacetone phosphate (DHAP) to D-glyceraldehyde-3-phosphate (G3P). The chain is Triosephosphate isomerase from Pyrobaculum calidifontis (strain DSM 21063 / JCM 11548 / VA1).